The primary structure comprises 2798 residues: Nipped-B-like protein (2798 aa).

Composition is skewed to polar residues over residues 128 to 173 (LSQN…QNSP) and 191 to 208 (HPSS…SVSS). Residues 128–338 (LSQNSMHSSP…IKLGKDEKDQ (211 aa)) form a disordered region. Phosphoserine is present on residues Ser150 and Ser162. Residues 234-249 (HHADNPRHGSSDDYLH) show a composition bias toward basic and acidic residues. A phosphoserine mark is found at Ser243, Ser256, Ser274, Ser280, Ser284, Ser301, Ser306, Ser318, and Ser350. The span at 482–500 (RESAIERERFSKEVQDKDK) shows a compositional bias: basic and acidic residues. Positions 482-940 (RESAIERERF…NKAEFPSYLL (459 aa)) are disordered. Polar residues predominate over residues 523-534 (PASQETGSTGNG). 5 stretches are compositionally biased toward basic and acidic residues: residues 562–572 (DSIKKPEETKQ), 593–625 (PENH…ESKP), 634–663 (KSNE…ESKQ), 672–685 (KQNE…KPND), and 694–899 (ENTK…DTNK). Phosphothreonine occurs at positions 713 and 746. Ser906 carries the post-translational modification Phosphoserine. Residues 908 to 933 (NSKDDKRTEGNRSKVDSNKAHTDNKA) show a composition bias toward basic and acidic residues. The PxVxL motif motif lies at 990-1003 (NKGAKPVVVLQKLS). Disordered stretches follow at residues 1011–1041 (IKDR…DQSV) and 1054–1186 (ESTM…TPEE). Residue Lys1076 is modified to N6-acetyllysine. 3 positions are modified to phosphoserine: Ser1083, Ser1084, and Ser1090. Over residues 1083–1094 (SSDEDNDSDEAF) the composition is skewed to acidic residues. The span at 1103 to 1133 (KDDDKAWEYEERDRRSSGDHRRSGHSHDGRR) shows a compositional bias: basic and acidic residues. Ser1144, Ser1146, and Ser1148 each carry phosphoserine. Tyr1153 is subject to Phosphotyrosine. Phosphoserine is present on Ser1154. Residues 1165 to 1176 (KMKKKEKQKKRK) show a composition bias toward basic residues. The residue at position 1183 (Thr1183) is a Phosphothreonine. Ser1191 carries the phosphoserine modification. The span at 1685–1705 (AMKSQKDEESSDATHHAKELE) shows a compositional bias: basic and acidic residues. Residues 1685-1706 (AMKSQKDEESSDATHHAKELET) form a disordered region. HEAT repeat units lie at residues 1761–1799 (AQSF…VDPS), 1837–1875 (PQLA…EQPT), 1939–1978 (YDWF…HILK), 2221–2261 (VNLK…LKEM), and 2307–2345 (LIHP…KYAG). The segment covering 2467-2483 (VKDKRKERKTSPAKENE) has biased composition (basic and acidic residues). Disordered stretches follow at residues 2467 to 2514 (VKDK…DDIN) and 2645 to 2690 (TSLL…DSTE). Residues Ser2487, Ser2503, Ser2505, Ser2507, Ser2509, Ser2646, and Ser2652 each carry the phosphoserine modification. The span at 2504-2513 (ESDSDSEDDI) shows a compositional bias: acidic residues. Thr2661 bears the Phosphothreonine mark. Ser2666 is subject to Phosphoserine.

Belongs to the SCC2/Nipped-B family. As to quaternary structure, heterodimerizes with MAU2/SCC4 to form the cohesin loading complex. The NIPBL-MAU2 heterodimer interacts with the cohesin complex composed of SMC1A/B and SMC3 heterodimer, RAD21 and STAG1/SA1. NIPBL directly contacts all members of the complex, RAD21, SMC1A/B, SMC3 and STAG1. Interacts directly (via PxVxL motif) with CBX3 and CBX5. Interacts with ZNF609 (via N-terminus). Interacts with the multiprotein complex Integrator. Interacts with BRD4. As to expression, spermatocytes and oocytes (at protein level).

Its subcellular location is the nucleus. The protein resides in the chromosome. Its function is as follows. Plays an important role in the loading of the cohesin complex on to DNA. Forms a heterodimeric complex (also known as cohesin loading complex) with MAU2/SCC4 which mediates the loading of the cohesin complex onto chromatin. Plays a role in cohesin loading at sites of DNA damage. Its recruitment to double-strand breaks (DSBs) sites occurs in a CBX3-, RNF8- and RNF168-dependent manner whereas its recruitment to UV irradiation-induced DNA damage sites occurs in a ATM-, ATR-, RNF8- and RNF168-dependent manner. Along with ZNF609, promotes cortical neuron migration during brain development by regulating the transcription of crucial genes in this process. Preferentially binds promoters containing paused RNA polymerase II. Up-regulates the expression of SEMA3A, NRP1, PLXND1 and GABBR2 genes, among others. This Mus musculus (Mouse) protein is Nipped-B-like protein (Nipbl).